A 153-amino-acid chain; its full sequence is Cytochrome c-type biogenesis protein CcmE (153 aa).

Residues 1–6 (MNARRR) are Cytoplasmic-facing. Residues 7-27 (LWSVLMLILAVGTAATLTIMA) traverse the membrane as a helical; Signal-anchor for type II membrane protein segment. Residues 28 to 153 (LRHNLTYLYM…LDTPIAETTP (126 aa)) lie on the Periplasmic side of the membrane. Heme contacts are provided by H121 and Y125. Positions 131-141 (ANKMQPTPTQH) are enriched in polar residues. The segment at 131-153 (ANKMQPTPTQHTHLDTPIAETTP) is disordered.

This sequence belongs to the CcmE/CycJ family.

It localises to the cell inner membrane. Its function is as follows. Heme chaperone required for the biogenesis of c-type cytochromes. Transiently binds heme delivered by CcmC and transfers the heme to apo-cytochromes in a process facilitated by CcmF and CcmH. In Xylella fastidiosa (strain Temecula1 / ATCC 700964), this protein is Cytochrome c-type biogenesis protein CcmE.